We begin with the raw amino-acid sequence, 257 residues long: Phycoerythrobilin:ferredoxin oxidoreductase (257 aa).

This sequence belongs to the HY2 family.

The catalysed reaction is (3Z)-phycoerythrobilin + oxidized 2[4Fe-4S]-[ferredoxin] = 15,16-dihydrobiliverdin + reduced 2[4Fe-4S]-[ferredoxin] + 2 H(+). Functionally, catalyzes the two-electron reduction of the C2 and C3(1) diene system of 15,16-dihydrobiliverdin. The chain is Phycoerythrobilin:ferredoxin oxidoreductase (pebB) from Prochlorococcus marinus subsp. pastoris (strain CCMP1986 / NIES-2087 / MED4).